Consider the following 579-residue polypeptide: 2-isopropylmalate synthase (579 aa).

A Pyruvate carboxyltransferase domain is found at 40–314 (PRWCAVDLRD…DPMIDFSDID (275 aa)). Mg(2+) is bound by residues D49, H253, H255, and N289. Residues 456 to 579 (SSKEDGQWGR…VNRAIRDAQA (124 aa)) form a regulatory domain region.

The protein belongs to the alpha-IPM synthase/homocitrate synthase family. LeuA type 2 subfamily. As to quaternary structure, homodimer. Mg(2+) is required as a cofactor.

The protein resides in the cytoplasm. It carries out the reaction 3-methyl-2-oxobutanoate + acetyl-CoA + H2O = (2S)-2-isopropylmalate + CoA + H(+). It participates in amino-acid biosynthesis; L-leucine biosynthesis; L-leucine from 3-methyl-2-oxobutanoate: step 1/4. In terms of biological role, catalyzes the condensation of the acetyl group of acetyl-CoA with 3-methyl-2-oxobutanoate (2-ketoisovalerate) to form 3-carboxy-3-hydroxy-4-methylpentanoate (2-isopropylmalate). In Arthrobacter sp. (strain FB24), this protein is 2-isopropylmalate synthase.